A 169-amino-acid chain; its full sequence is Cytochrome c oxidase subunit 4 isoform 1, mitochondrial (169 aa).

The transit peptide at 1 to 22 directs the protein to the mitochondrion; the sequence is MLATRALSLIGKRAISTSVCLR. The Mitochondrial matrix segment spans residues 23–98; that stretch reads AHGSVVKSED…SFAEMNKGTN (76 aa). K29 bears the N6-acetyllysine; alternate mark. K29 is subject to N6-succinyllysine; alternate. An N6-acetyllysine modification is found at K53. Phosphoserine occurs at positions 56 and 58. An N6-acetyllysine; alternate modification is found at K60. Position 60 is an N6-succinyllysine; alternate (K60). K67 is subject to N6-acetyllysine. The helical transmembrane segment at 99–124 threads the bilayer; it reads EWKTVVGLAMFFIGFTALVLIWEKSY. At 125 to 169 the chain is on the mitochondrial intermembrane side; it reads VYGPIPHTFDRDWVAMQTKRMLDMKVNPIQGFSAKWDYNKNEWKK.

The protein belongs to the cytochrome c oxidase IV family. As to quaternary structure, component of the cytochrome c oxidase (complex IV, CIV), a multisubunit enzyme composed of 14 subunits. The complex is composed of a catalytic core of 3 subunits MT-CO1, MT-CO2 and MT-CO3, encoded in the mitochondrial DNA, and 11 supernumerary subunits COX4I, COX5A, COX5B, COX6A, COX6B, COX6C, COX7A, COX7B, COX7C, COX8 and NDUFA4, which are encoded in the nuclear genome. The complex exists as a monomer or a dimer and forms supercomplexes (SCs) in the inner mitochondrial membrane with NADH-ubiquinone oxidoreductase (complex I, CI) and ubiquinol-cytochrome c oxidoreductase (cytochrome b-c1 complex, complex III, CIII), resulting in different assemblies (supercomplex SCI(1)III(2)IV(1) and megacomplex MCI(2)III(2)IV(2)). Interacts with PHB2; the interaction decreases in absence of SPHK2. Interacts with AFG1L. Interacts with ABCB7; this interaction allows the regulation of cellular iron homeostasis and cellular reactive oxygen species (ROS) levels in cardiomyocytes. Interacts with FLVCR2; this interaction occurs in the absence of heme and is disrupted upon heme binding. Interacts with IRGC.

Its subcellular location is the mitochondrion inner membrane. It functions in the pathway energy metabolism; oxidative phosphorylation. Its function is as follows. Component of the cytochrome c oxidase, the last enzyme in the mitochondrial electron transport chain which drives oxidative phosphorylation. The respiratory chain contains 3 multisubunit complexes succinate dehydrogenase (complex II, CII), ubiquinol-cytochrome c oxidoreductase (cytochrome b-c1 complex, complex III, CIII) and cytochrome c oxidase (complex IV, CIV), that cooperate to transfer electrons derived from NADH and succinate to molecular oxygen, creating an electrochemical gradient over the inner membrane that drives transmembrane transport and the ATP synthase. Cytochrome c oxidase is the component of the respiratory chain that catalyzes the reduction of oxygen to water. Electrons originating from reduced cytochrome c in the intermembrane space (IMS) are transferred via the dinuclear copper A center (CU(A)) of subunit 2 and heme A of subunit 1 to the active site in subunit 1, a binuclear center (BNC) formed by heme A3 and copper B (CU(B)). The BNC reduces molecular oxygen to 2 water molecules using 4 electrons from cytochrome c in the IMS and 4 protons from the mitochondrial matrix. This is Cytochrome c oxidase subunit 4 isoform 1, mitochondrial (Cox4i1) from Rattus norvegicus (Rat).